An 853-amino-acid chain; its full sequence is Cytochrome P450 monooxygenase mpaDE (853 aa).

The Lumenal segment spans residues 1–6 (MKSLSL). The chain crosses the membrane as a helical span at residues 7–29 (TWITAVAVVLYLVQRYVRSYWRL). At 30–853 (KDIPGPVLAK…DIENSIEGQK (824 aa)) the chain is on the cytoplasmic side. Cys-449 is a binding site for heme.

It belongs to the cytochrome P450 family. The cofactor is heme.

The protein localises to the endoplasmic reticulum membrane. The enzyme catalyses 5-methylorsellinate + reduced [NADPH--hemoprotein reductase] + O2 = 4,6-dihydroxy-2-(hydroxymethyl)-3-methylbenzoate + oxidized [NADPH--hemoprotein reductase] + H2O + H(+). It carries out the reaction 4,6-dihydroxy-2-(hydroxymethyl)-3-methylbenzoate + H(+) = 5,7-dihydroxy-4-methylphthalide + H2O. It functions in the pathway secondary metabolite biosynthesis; terpenoid biosynthesis. Its function is as follows. Cytochrome P450 monooxygenase; part of the gene cluster that mediates the biosynthesis of mycophenolic acid (MPA), the first isolated antibiotic natural product in the world obtained from a culture of Penicillium brevicompactum in 1893. MpaDE is an endoplasmic reticulum-bound enzyme that catalyzes the conversion of 5-methylorsellinic acid (5MOA) into the phthalide compound 5,7-dihydroxy-4,6-dimethylphthalide (DHMP). MpaDE first catalyzes hydroxylation of 5-MOA to 4,6-dihydroxy-2-(hydroxymethyl)-3-methylbenzoic acid (DHMB), and then acts as a lactone synthase that catalyzes the ring closure to convert DHMB into DHMP. The first step of the pathway is the synthesis of 5-methylorsellinic acid (5MOA) by the cytosolic polyketide synthase mpaC. 5MOA is then converted to the phthalide compound 5,7-dihydroxy-4,6-dimethylphthalide (DHMP) by the endoplasmic reticulum-bound cytochrome P450 monooxygenase mpaDE. MpaDE first catalyzes hydroxylation of 5-MOA to 4,6-dihydroxy-2-(hydroxymethyl)-3-methylbenzoic acid (DHMB). MpaDE then acts as a lactone synthase that catalyzes the ring closure to convert DHMB into DHMP. The next step is the prenylation of DHMP by the Golgi apparatus-associated prenyltransferase mpaA to yield farnesyl-DHMP (FDHMP). The ER-bound oxygenase mpaB then mediates the oxidative cleavage the C19-C20 double bond in FDHMP to yield FDHMP-3C via a mycophenolic aldehyde intermediate. The O-methyltransferase mpaG catalyzes the methylation of FDHMP-3C to yield MFDHMP-3C. After the cytosolic methylation of FDHMP-3C, MFDHMP-3C enters into peroxisomes probably via free diffusion due to its low molecular weight. Upon a peroxisomal CoA ligation reaction, catalyzed by a beta-oxidation component enzyme acyl-CoA ligase ACL891, MFDHMP-3C-CoA would then be restricted to peroxisomes for the following beta-oxidation pathway steps. The peroxisomal beta-oxidation machinery than converts MFDHMP-3C-CoA into MPA_CoA, via a beta-oxidation chain-shortening process. Finally mpaH acts as a peroxisomal acyl-CoA hydrolase with high substrate specificity toward MPA-CoA to release the final product MPA. In Penicillium brevicompactum, this protein is Cytochrome P450 monooxygenase mpaDE.